A 291-amino-acid polypeptide reads, in one-letter code: HTH-type transcriptional activator AmpR (291 aa).

The HTH lysR-type domain maps to 6–63; that stretch reads LPLNSLRAFEAAARHLSFTHAAIELNVTHSAISQHVKTLEQHLNCQLFVRVSRGLMLT. The segment at residues 23–42 is a DNA-binding region (H-T-H motif); that stretch reads FTHAAIELNVTHSAISQHVK.

Belongs to the LysR transcriptional regulatory family.

The protein localises to the cytoplasm. This protein is a positive regulator of gene expression of cephalosporinase (AmpC). The protein is HTH-type transcriptional activator AmpR (ampR) of Enterobacter cloacae.